A 204-amino-acid polypeptide reads, in one-letter code: Leucyl/phenylalanyl-tRNA--protein transferase (204 aa).

Belongs to the L/F-transferase family.

The protein resides in the cytoplasm. It carries out the reaction N-terminal L-lysyl-[protein] + L-leucyl-tRNA(Leu) = N-terminal L-leucyl-L-lysyl-[protein] + tRNA(Leu) + H(+). The enzyme catalyses N-terminal L-arginyl-[protein] + L-leucyl-tRNA(Leu) = N-terminal L-leucyl-L-arginyl-[protein] + tRNA(Leu) + H(+). The catalysed reaction is L-phenylalanyl-tRNA(Phe) + an N-terminal L-alpha-aminoacyl-[protein] = an N-terminal L-phenylalanyl-L-alpha-aminoacyl-[protein] + tRNA(Phe). Its function is as follows. Functions in the N-end rule pathway of protein degradation where it conjugates Leu, Phe and, less efficiently, Met from aminoacyl-tRNAs to the N-termini of proteins containing an N-terminal arginine or lysine. The chain is Leucyl/phenylalanyl-tRNA--protein transferase from Rhizobium leguminosarum bv. trifolii (strain WSM2304).